Consider the following 348-residue polypeptide: Phenylalanine--tRNA ligase alpha subunit (348 aa).

Glutamate 269 serves as a coordination point for Mg(2+).

This sequence belongs to the class-II aminoacyl-tRNA synthetase family. Phe-tRNA synthetase alpha subunit type 1 subfamily. In terms of assembly, tetramer of two alpha and two beta subunits. Mg(2+) is required as a cofactor.

Its subcellular location is the cytoplasm. It carries out the reaction tRNA(Phe) + L-phenylalanine + ATP = L-phenylalanyl-tRNA(Phe) + AMP + diphosphate + H(+). The chain is Phenylalanine--tRNA ligase alpha subunit from Dechloromonas aromatica (strain RCB).